A 432-amino-acid polypeptide reads, in one-letter code: MPEYVNWLRHASPYINAHRDCTFVVMLPGDGVAHPNFGNIVHDLVLLHSLGVRLVLVHGSRPQIESRLAQRGITPRYHRDMRITDTETLECVIDAVGQLRISIEARLSMDMAASPMQGSRLRVTSGNVVTARPIGVLEGIDYQHTGEVRRVDRKGINRLLDERHIVLLSPLGYSPTGEIFNLACEDVATRAAIDLAADKLLLFGAETGLLDEQGRLVRELRPQQVPAHLQRLGGNYQAELLDAAAEACRGGVARSHIVSYAEDGALLTELFTRDGGGTLVAQEQFELVREAAIEDVGGLMDLITPLEEQGILVRRSREVLEREITQFSVVEREGLIIACAALYPIADSESGELACLAVNPEYRHGGRGDELLERIENRARALGIKTLFVLTTRTAHWFRERGFEPSSVDRLPSARASLYNFQRNSKIFEKAI.

Residues 286-425 (ELVREAAIED…ASLYNFQRNS (140 aa)) enclose the N-acetyltransferase domain.

Belongs to the acetyltransferase family. ArgA subfamily.

The protein resides in the cytoplasm. It catalyses the reaction L-glutamate + acetyl-CoA = N-acetyl-L-glutamate + CoA + H(+). Its pathway is amino-acid biosynthesis; L-arginine biosynthesis; N(2)-acetyl-L-ornithine from L-glutamate: step 1/4. This is Amino-acid acetyltransferase from Pseudomonas syringae pv. tomato (strain ATCC BAA-871 / DC3000).